A 343-amino-acid chain; its full sequence is Selenide, water dikinase (343 aa).

Residue selenocysteine 13 is part of the active site. Position 13 (selenocysteine 13) is a non-standard amino acid, selenocysteine. Residues lysine 16 and 44 to 46 (TAD) each bind ATP. Aspartate 47 is a binding site for Mg(2+). ATP-binding positions include aspartate 64, aspartate 87, and 135-137 (GHT). Aspartate 87 is a Mg(2+) binding site. Aspartate 223 contributes to the Mg(2+) binding site.

The protein belongs to the selenophosphate synthase 1 family. Class I subfamily. As to quaternary structure, homodimer. It depends on Mg(2+) as a cofactor.

It carries out the reaction hydrogenselenide + ATP + H2O = selenophosphate + AMP + phosphate + 2 H(+). Functionally, synthesizes selenophosphate from selenide and ATP. In Geobacter metallireducens (strain ATCC 53774 / DSM 7210 / GS-15), this protein is Selenide, water dikinase.